A 776-amino-acid polypeptide reads, in one-letter code: Cilium assembly protein DZIP1L (776 aa).

The C2H2-type zinc finger occupies His166–His189. The stretch at Gly196–Asn450 forms a coiled coil. A phosphoserine mark is found at Ser425 and Ser426. The disordered stretch occupies residues Ser520–Trp776. Positions Gly600–Ser618 are enriched in low complexity. Residues Trp652–Val683 show a composition bias toward polar residues. The span at Asn685–Ala694 shows a compositional bias: basic and acidic residues. Residues Thr709–Thr721 are compositionally biased toward polar residues.

The protein belongs to the DZIP C2H2-type zinc-finger protein family. In terms of assembly, interacts with SEPTIN2.

Its subcellular location is the cytoplasm. It localises to the cytoskeleton. The protein localises to the cilium basal body. It is found in the microtubule organizing center. The protein resides in the centrosome. Its subcellular location is the centriole. Functionally, involved in primary cilium formation. Probably acts as a transition zone protein required for localization of PKD1/PC1 and PKD2/PC2 to the ciliary membrane. The polypeptide is Cilium assembly protein DZIP1L (Rattus norvegicus (Rat)).